A 597-amino-acid chain; its full sequence is Elongation factor 4 (597 aa).

The region spanning 2-184 (NNIRNFSIIA…SLITKVPPPK (183 aa)) is the tr-type G domain. GTP contacts are provided by residues 14–19 (DHGKST) and 131–134 (NKID).

It belongs to the TRAFAC class translation factor GTPase superfamily. Classic translation factor GTPase family. LepA subfamily.

It is found in the cell inner membrane. It catalyses the reaction GTP + H2O = GDP + phosphate + H(+). In terms of biological role, required for accurate and efficient protein synthesis under certain stress conditions. May act as a fidelity factor of the translation reaction, by catalyzing a one-codon backward translocation of tRNAs on improperly translocated ribosomes. Back-translocation proceeds from a post-translocation (POST) complex to a pre-translocation (PRE) complex, thus giving elongation factor G a second chance to translocate the tRNAs correctly. Binds to ribosomes in a GTP-dependent manner. This is Elongation factor 4 from Janthinobacterium sp. (strain Marseille) (Minibacterium massiliensis).